A 470-amino-acid polypeptide reads, in one-letter code: Methylenetetrahydrofolate--tRNA-(uracil-5-)-methyltransferase TrmFO (470 aa).

10 to 15 provides a ligand contact to FAD; the sequence is GAGLAG.

This sequence belongs to the MnmG family. TrmFO subfamily. Requires FAD as cofactor.

The protein resides in the cytoplasm. It carries out the reaction uridine(54) in tRNA + (6R)-5,10-methylene-5,6,7,8-tetrahydrofolate + NADH + H(+) = 5-methyluridine(54) in tRNA + (6S)-5,6,7,8-tetrahydrofolate + NAD(+). The catalysed reaction is uridine(54) in tRNA + (6R)-5,10-methylene-5,6,7,8-tetrahydrofolate + NADPH + H(+) = 5-methyluridine(54) in tRNA + (6S)-5,6,7,8-tetrahydrofolate + NADP(+). Its function is as follows. Catalyzes the folate-dependent formation of 5-methyl-uridine at position 54 (M-5-U54) in all tRNAs. This Prochlorococcus marinus (strain MIT 9301) protein is Methylenetetrahydrofolate--tRNA-(uracil-5-)-methyltransferase TrmFO.